Here is a 123-residue protein sequence, read N- to C-terminus: UPF0299 membrane protein VV1471 (123 aa).

4 helical membrane passes run Leu-8–Ile-28, Ser-35–Val-55, Met-71–Ala-91, and Leu-94–Leu-114.

It belongs to the UPF0299 family.

The protein resides in the cell inner membrane. This is UPF0299 membrane protein VV1471 from Vibrio vulnificus (strain YJ016).